A 456-amino-acid chain; its full sequence is Chromosomal replication initiator protein DnaA (456 aa).

The domain I, interacts with DnaA modulators stretch occupies residues 1–83 (MTASLWQQCL…LRFDIGNRPH (83 aa)). A domain II region spans residues 83-119 (HPVAVARAPARGADPVNNSQKSWESKAEAKPEPNHKS). The disordered stretch occupies residues 92–122 (ARGADPVNNSQKSWESKAEAKPEPNHKSNTN). Residues 105–117 (WESKAEAKPEPNH) show a composition bias toward basic and acidic residues. Residues 120 to 336 (NTNVNYTFEN…GALNRVIANA (217 aa)) form a domain III, AAA+ region region. ATP contacts are provided by glycine 164, glycine 166, lysine 167, and threonine 168. The segment at 337 to 456 (NFTGRAINID…YSNLIRTLSS (120 aa)) is domain IV, binds dsDNA.

Belongs to the DnaA family. As to quaternary structure, oligomerizes as a right-handed, spiral filament on DNA at oriC.

It localises to the cytoplasm. Its function is as follows. Plays an essential role in the initiation and regulation of chromosomal replication. ATP-DnaA binds to the origin of replication (oriC) to initiate formation of the DNA replication initiation complex once per cell cycle. Binds the DnaA box (a 9 base pair repeat at the origin) and separates the double-stranded (ds)DNA. Forms a right-handed helical filament on oriC DNA; dsDNA binds to the exterior of the filament while single-stranded (ss)DNA is stabiized in the filament's interior. The ATP-DnaA-oriC complex binds and stabilizes one strand of the AT-rich DNA unwinding element (DUE), permitting loading of DNA polymerase. After initiation quickly degrades to an ADP-DnaA complex that is not apt for DNA replication. Binds acidic phospholipids. The protein is Chromosomal replication initiator protein DnaA of Aeromonas hydrophila subsp. hydrophila (strain ATCC 7966 / DSM 30187 / BCRC 13018 / CCUG 14551 / JCM 1027 / KCTC 2358 / NCIMB 9240 / NCTC 8049).